Here is a 321-residue protein sequence, read N- to C-terminus: Glucokinase (321 aa).

8 to 13 (GDVGGT) lines the ATP pocket.

This sequence belongs to the bacterial glucokinase family.

It is found in the cytoplasm. It catalyses the reaction D-glucose + ATP = D-glucose 6-phosphate + ADP + H(+). This chain is Glucokinase, found in Klebsiella pneumoniae (strain 342).